The sequence spans 260 residues: Indole-3-glycerol phosphate synthase (260 aa).

The protein belongs to the TrpC family.

It carries out the reaction 1-(2-carboxyphenylamino)-1-deoxy-D-ribulose 5-phosphate + H(+) = (1S,2R)-1-C-(indol-3-yl)glycerol 3-phosphate + CO2 + H2O. It participates in amino-acid biosynthesis; L-tryptophan biosynthesis; L-tryptophan from chorismate: step 4/5. The protein is Indole-3-glycerol phosphate synthase of Ruminiclostridium cellulolyticum (strain ATCC 35319 / DSM 5812 / JCM 6584 / H10) (Clostridium cellulolyticum).